Reading from the N-terminus, the 44-residue chain is Defensin-like protein 1 (44 aa).

Glutamine 1 is subject to Pyrrolidone carboxylic acid. Cysteine 15 and cysteine 36 are joined by a disulfide.

Belongs to the DEFL family. In terms of assembly, forms oligomers in its native state.

The protein resides in the secreted. Possesses antifungal activity sensitive to inorganic cations. The protein is Defensin-like protein 1 (AFP1) of Brassica napus (Rape).